The following is a 301-amino-acid chain: Glycine--tRNA ligase alpha subunit (301 aa).

The protein belongs to the class-II aminoacyl-tRNA synthetase family. In terms of assembly, tetramer of two alpha and two beta subunits.

The protein localises to the cytoplasm. The catalysed reaction is tRNA(Gly) + glycine + ATP = glycyl-tRNA(Gly) + AMP + diphosphate. This Campylobacter hominis (strain ATCC BAA-381 / DSM 21671 / CCUG 45161 / LMG 19568 / NCTC 13146 / CH001A) protein is Glycine--tRNA ligase alpha subunit.